The following is a 701-amino-acid chain: Translation initiation factor IF-2 (701 aa).

The span at 48–62 (KIYKPEKAEQSEKSQ) shows a compositional bias: basic and acidic residues. Positions 48 to 123 (KIYKPEKAEQ…EPKEMPSKIT (76 aa)) are disordered. 2 stretches are compositionally biased toward low complexity: residues 63 to 89 (QKNT…NNKP) and 97 to 109 (NNKN…NNKQ). Residues 110-119 (PKQEEPKEMP) show a composition bias toward basic and acidic residues. A tr-type G domain is found at 203–372 (ERPAVVTIMG…VLTSEVQELK (170 aa)). The G1 stretch occupies residues 212–219 (GHVDHGKT). 212–219 (GHVDHGKT) contributes to the GTP binding site. Residues 237–241 (GITQH) are G2. The tract at residues 258–261 (DTPG) is G3. GTP contacts are provided by residues 258–262 (DTPGH) and 312–315 (NKID). A G4 region spans residues 312–315 (NKID). A G5 region spans residues 348–350 (SAL).

Belongs to the TRAFAC class translation factor GTPase superfamily. Classic translation factor GTPase family. IF-2 subfamily.

Its subcellular location is the cytoplasm. One of the essential components for the initiation of protein synthesis. Protects formylmethionyl-tRNA from spontaneous hydrolysis and promotes its binding to the 30S ribosomal subunits. Also involved in the hydrolysis of GTP during the formation of the 70S ribosomal complex. This chain is Translation initiation factor IF-2, found in Staphylococcus saprophyticus subsp. saprophyticus (strain ATCC 15305 / DSM 20229 / NCIMB 8711 / NCTC 7292 / S-41).